The chain runs to 1528 residues: MRVRGALQAAALLASALWAAPLLAKDHPTFKTTKLDTQPNNLNYFEGSDTILFHDTHKSNLWRSDDAGATWSVVKDIPDGKVARLYMHDFDSKRAFAITDGRKHYRTTDQGKTWKTFEVDAAWDTERFDILHFHATDPDRIIFNGLHCLGFLCEEVSLYTIDDFETPAKPLRPDTLGCWWAKSSPVFTTGDSDLDKDRILCIIMGVDSIFSEDRRLVISDDFFKADKEGNIQEFEPNLAGDKPVRGVVNVAAVKRYFMVATTSANTDEMALFISTDTKKWQRAMFPNAHDDHDHKIVQEAYTVLESTNYSIQLNVMTGSKSAPMGIMFTSNYDGTYFSENLEYTNLNMFGHVDFEKIAGIQGIFLVNKVDNGKEVDEKPSTKKKLVSEITFDDGRTFDKVTADGKRIHLHSVTELNNVGRVFSSPAPGLVMANGNTGDYLGDYWEDANLYVSDDAGKTWKKALKGPHKYEFGDQGSILVAVRDSKEEDISEISYSLDHGENWVDEKLPDDLKIQPWILTTTPDSTGLQFVLIGKAKGAWHVIHIDFEGLHEATCKESDMEEWHARVDKDGEPTCIMGHTQTYPRRKKDAKCFLKKEFKLAEVETKDCDCTDQDYECDYNFERNDKGICVSRGPIPIPEGACKEGDRNGKFLGTSGYRKIPGNTCKDTKETKDKYKDVERSCGDGIGAPPDEATGELQQVDTKGKFGHWTHWEKHYLERGESSSDSSETIIMRGMNRTVDDSGPKVGPIWRTTDHGKKWDKVDFFKDDEVISIVPHPTVKDWVFFLTEGKKLIYTPDRGKRFRTFEVPQPADFEAAANGIFPLIFHPDKPNWLIWLGKKCESKNDCYRVAYGTKDGERWETLARDVYRCEFTGAEAYGRKYANRALEQILCLKHEKEGDNDSALQLVSSNDWFNQDERVRLKEAKEFATMAEFIVVATEDTEKKTLRAYASLDGSLYSEAKFPFGFEVPHQHAYTVLDSSTHAVNLFVATRMEGDKSLGTILKSNSNGTSYVVSVKNVNCDQYFYVDFEKMVGLEGVALVNVVVNPDAKSSAPKKLQTKITHNDGAQWAYLPTPRKDEFGKFPCSSSGTEKCALHIQGYTQRRDRGKTYSSEGAVGVMFGWGNVGDSLGSIKDADTFMTTDAGITWKRVKKGRWNWALGDQGSIIVLVPIRGQKTDTLEYSLDQGATWKKHTFSKEKVDIWDLTTTRSGNSQNFLIWGENSDGLFTTKIDFTKFTDHVCKYDPENLSKSDYQIFSPKHPLQPDGCLFGHVSQYLRKKPGLKCFNDFRLDPLYSKQNCTCTRSDFECDFNYELDKHGQCSLVSGLKPKDHKLWCKEHPDEIEYYEPTGFRRIPLTTCQGGLDFEKAAAVHPCPGHEDDFERKHRVSGIAIFFAVVLPVAAASAIGWWVYRHWDGKFGQIRLGEQGASTMEFFDADRPWVKYPVIALSAVVALAGAMPLVLGALWRTAKSTAERWGIGGGGGGRGGWSRLDGGGASRTFRTRDSFARGRGDYTIVDEDEGELLGEESDEEV.

An N-terminal signal peptide occupies residues 1 to 24; the sequence is MRVRGALQAAALLASALWAAPLLA. At 25-1385 the chain is on the lumenal side; the sequence is KDHPTFKTTK…DFERKHRVSG (1361 aa). BNR repeat units lie at residues 62 to 72 and 105 to 115; these read WRSDDAGATWS and YRTTDQGKTWK. An N-linked (GlcNAc...) asparagine glycan is attached at asparagine 308. 2 BNR repeats span residues 450–461 and 494–502; these read YVSDDAGKTWKK and YSLDHGENW. An N-linked (GlcNAc...) asparagine glycan is attached at asparagine 735. The BNR 5 repeat unit spans residues 749–759; the sequence is WRTTDHGKKWD. 2 N-linked (GlcNAc...) asparagine glycosylation sites follow: asparagine 899 and asparagine 1006. BNR repeat units lie at residues 1136–1146 and 1179–1189; these read FMTTDAGITWK and YSLDQGATWKK. Residues asparagine 1244 and asparagine 1295 are each glycosylated (N-linked (GlcNAc...) asparagine). A helical membrane pass occupies residues 1386–1406; that stretch reads IAIFFAVVLPVAAASAIGWWV. The Cytoplasmic segment spans residues 1407 to 1440; that stretch reads YRHWDGKFGQIRLGEQGASTMEFFDADRPWVKYP. Residues 1441–1461 form a helical membrane-spanning segment; sequence VIALSAVVALAGAMPLVLGAL. Topologically, residues 1462 to 1528 are lumenal; that stretch reads WRTAKSTAER…LLGEESDEEV (67 aa).

It belongs to the VPS10-related sortilin family.

The protein resides in the golgi apparatus. The protein localises to the trans-Golgi network membrane. It is found in the prevacuolar compartment membrane. Its function is as follows. Functions as a sorting receptor in the Golgi compartment required for the intracellular sorting and delivery of soluble vacuolar proteins, like carboxypeptidase Y (CPY) and proteinase A. Executes multiple rounds of sorting by cycling between the late Golgi and a prevacuolar endosome-like compartment. This is Vacuolar protein sorting/targeting protein 10 (vps10) from Neurospora crassa (strain ATCC 24698 / 74-OR23-1A / CBS 708.71 / DSM 1257 / FGSC 987).